The following is a 209-amino-acid chain: Kynurenine formamidase (209 aa).

Trp19 contacts substrate. The Zn(2+) site is built by His49, His53, and Asp55. His59 (proton donor/acceptor) is an active-site residue. Residues His160 and Glu172 each coordinate Zn(2+).

The protein belongs to the Cyclase 1 superfamily. KynB family. Homodimer. Requires Zn(2+) as cofactor.

It carries out the reaction N-formyl-L-kynurenine + H2O = L-kynurenine + formate + H(+). It functions in the pathway amino-acid degradation; L-tryptophan degradation via kynurenine pathway; L-kynurenine from L-tryptophan: step 2/2. Functionally, catalyzes the hydrolysis of N-formyl-L-kynurenine to L-kynurenine, the second step in the kynurenine pathway of tryptophan degradation. This is Kynurenine formamidase from Ralstonia pickettii (strain 12J).